The sequence spans 626 residues: Lysine--tRNA ligase, cytoplasmic (626 aa).

Residue Met1 is modified to N-acetylmethionine. 2 stretches are compositionally biased toward polar residues: residues 1–11 and 18–27; these read MEGAADQTTKA and DSSTTLNAAE. The tract at residues 1 to 84 is disordered; the sequence is MEGAADQTTK…QKAVAADDEE (84 aa). Residues 37–69 are a coiled coil; sequence RSKNALKKEQKMKQKEEEKRRKDEEKAEKAKQA. A compositionally biased stretch (basic and acidic residues) spans 42-67; it reads LKKEQKMKQKEEEKRRKDEEKAEKAK. Low complexity predominate over residues 69-78; sequence APKASSQKAV. Positions 141-217 form a DNA-binding region, OB; that stretch reads SLAGRIMSKR…RGELSIFPRS (77 aa). Substrate is bound by residues Gly313 and Glu337. ATP contacts are provided by residues 359 to 361 and 367 to 368; these read RNE and HN. Substrate contacts are provided by Glu375 and Tyr377. 2 residues coordinate Ca(2+): Glu521 and Glu528. ATP is bound at residue 528-529; the sequence is EL. Residues Asn531 and Glu535 each coordinate substrate. Residue 584 to 587 coordinates ATP; sequence GIDR.

This sequence belongs to the class-II aminoacyl-tRNA synthetase family. Ca(2+) is required as a cofactor.

The protein resides in the cytoplasm. Its subcellular location is the cytosol. The catalysed reaction is tRNA(Lys) + L-lysine + ATP = L-lysyl-tRNA(Lys) + AMP + diphosphate. Catalyzes the specific attachment of an amino acid to its cognate tRNA in a 2 step reaction: the amino acid (AA) is first activated by ATP to form AA-AMP and then transferred to the acceptor end of the tRNA. Promotes aminoacylation of non-cognate tRNAs and translational recoding of lysine at nonsense codons. The protein is Lysine--tRNA ligase, cytoplasmic of Arabidopsis thaliana (Mouse-ear cress).